Reading from the N-terminus, the 67-residue chain is ATP synthase F(0) complex subunit 8 (67 aa).

A helical transmembrane segment spans residues 8–24 (TWLIMISSMILTLFITF). K54 carries the post-translational modification N6-acetyllysine; alternate. At K54 the chain carries N6-succinyllysine; alternate. Residue K57 is modified to N6-acetyllysine.

Belongs to the ATPase protein 8 family. As to quaternary structure, component of the ATP synthase complex composed at least of ATP5F1A/subunit alpha, ATP5F1B/subunit beta, ATP5MC1/subunit c (homooctomer), MT-ATP6/subunit a, MT-ATP8/subunit 8, ATP5ME/subunit e, ATP5MF/subunit f, ATP5MG/subunit g, ATP5MK/subunit k, ATP5MJ/subunit j, ATP5F1C/subunit gamma, ATP5F1D/subunit delta, ATP5F1E/subunit epsilon, ATP5PF/subunit F6, ATP5PB/subunit b, ATP5PD/subunit d, ATP5PO/subunit OSCP. ATP synthase complex consists of a soluble F(1) head domain (subunits alpha(3) and beta(3)) - the catalytic core - and a membrane F(0) domain - the membrane proton channel (subunits c, a, 8, e, f, g, k and j). These two domains are linked by a central stalk (subunits gamma, delta, and epsilon) rotating inside the F1 region and a stationary peripheral stalk (subunits F6, b, d, and OSCP). Interacts with PRICKLE3.

It localises to the mitochondrion membrane. In terms of biological role, subunit 8, of the mitochondrial membrane ATP synthase complex (F(1)F(0) ATP synthase or Complex V) that produces ATP from ADP in the presence of a proton gradient across the membrane which is generated by electron transport complexes of the respiratory chain. ATP synthase complex consist of a soluble F(1) head domain - the catalytic core - and a membrane F(1) domain - the membrane proton channel. These two domains are linked by a central stalk rotating inside the F(1) region and a stationary peripheral stalk. During catalysis, ATP synthesis in the catalytic domain of F(1) is coupled via a rotary mechanism of the central stalk subunits to proton translocation. In vivo, can only synthesize ATP although its ATP hydrolase activity can be activated artificially in vitro. Part of the complex F(0) domain. This Halichoerus grypus (Gray seal) protein is ATP synthase F(0) complex subunit 8.